The primary structure comprises 393 residues: 2-methylcitrate synthase (393 aa).

Substrate-binding residues include Arg92 and His207. His242 is an active-site residue. 275-279 (KIMGF) is a CoA binding site. Residue His281 is part of the active site. Residue Arg290 participates in substrate binding. Residue Asp332 is part of the active site. Arg357 and Arg376 together coordinate substrate.

It belongs to the citrate synthase family. As to quaternary structure, homodimer.

It carries out the reaction propanoyl-CoA + oxaloacetate + H2O = (2S,3S)-2-methylcitrate + CoA + H(+). The catalysed reaction is oxaloacetate + acetyl-CoA + H2O = citrate + CoA + H(+). It functions in the pathway organic acid metabolism; propanoate degradation. It participates in carbohydrate metabolism; tricarboxylic acid cycle; isocitrate from oxaloacetate: step 1/2. Functionally, involved in the catabolism of short chain fatty acids (SCFA) via the tricarboxylic acid (TCA)(acetyl degradation route) and via the 2-methylcitrate cycle I (propionate degradation route). Catalyzes the Claisen condensation of propionyl-CoA and oxaloacetate (OAA) to yield 2-methylcitrate (2-MC) and CoA. Also catalyzes the condensation of oxaloacetate with acetyl-CoA. In Mycobacterium tuberculosis (strain ATCC 35801 / TMC 107 / Erdman), this protein is 2-methylcitrate synthase (gltA1).